The primary structure comprises 330 residues: 6-methylsalicylic acid decarboxylase acuB (330 aa).

The Zn(2+) site is built by histidine 6, histidine 8, histidine 156, and aspartate 276.

Belongs to the metallo-dependent hydrolases superfamily. ACMSD family. In terms of assembly, monomer.

The protein resides in the cytoplasm. It localises to the cytosol. The enzyme catalyses 6-methylsalicylate + H(+) = 3-methylphenol + CO2. It participates in secondary metabolite biosynthesis. Functionally, 6-methylsalicylic acid decarboxylase; part of the gene cluster that mediates the biosynthesis of aculins. The pathway begins with the synthesis of 6-methylsalicylic acid by the polyketide synthase (PKS) acuA via condensation of acetate and malonate units. The 6-methylsalicylic acid decarboxylase acuB then catalyzes the decarboxylation of 6-methylsalicylic acid to yield m-cresol (also known as 3-methylphenol). These first reactions occur in the cytosol. The intermediate m-cresol is then transported into the endoplasmic reticulum where the cytochrome P450 monooxygenase acuC converts it to m-hydroxybenzyl alcohol, which is further converted to gentisyl alcohol by the cytochrome P450 monooxygenase acuD. Gentisyl alcohol is further oxidized by the oxidoreductase acuE that probably catalyzes hydroxylation of the aromatic ring. The aromatic system might then be opened by oxidation through a Baeyer-Villiger type of oxidation, which could be catalyzed by acuF, with the carboxylic acid at C-1 subsequently reduced to an aldehyde by acuG. Subsequently, a hemiacetal is formed, before the dehydrogenase acuH would reduce the double bond between C-4 and C-6. Finally, keto-enol tautomerism results in formation of aculinic acid, which exists as two diastereomers (both R/S configurations at C-1) by non-enzymatic hemiacetal formation. The carboxypeptidase acuI could be involved in the linking of aculinic acid to an aculene A moiety produced by the aculene biosynthesis cluster and which leads to the production of aculin A. AcuI may also be involved in the attachment of proline to aculinic acid to form epi-aculins A and B. The protein is 6-methylsalicylic acid decarboxylase acuB of Aspergillus aculeatus (strain ATCC 16872 / CBS 172.66 / WB 5094).